A 393-amino-acid chain; its full sequence is NAD(P)H-quinone oxidoreductase subunit H, chloroplastic (393 aa).

The protein belongs to the complex I 49 kDa subunit family. In terms of assembly, NDH is composed of at least 16 different subunits, 5 of which are encoded in the nucleus.

The protein localises to the plastid. The protein resides in the chloroplast thylakoid membrane. It catalyses the reaction a plastoquinone + NADH + (n+1) H(+)(in) = a plastoquinol + NAD(+) + n H(+)(out). It carries out the reaction a plastoquinone + NADPH + (n+1) H(+)(in) = a plastoquinol + NADP(+) + n H(+)(out). In terms of biological role, NDH shuttles electrons from NAD(P)H:plastoquinone, via FMN and iron-sulfur (Fe-S) centers, to quinones in the photosynthetic chain and possibly in a chloroplast respiratory chain. The immediate electron acceptor for the enzyme in this species is believed to be plastoquinone. Couples the redox reaction to proton translocation, and thus conserves the redox energy in a proton gradient. This is NAD(P)H-quinone oxidoreductase subunit H, chloroplastic from Huperzia lucidula (Shining clubmoss).